Reading from the N-terminus, the 101-residue chain is Movement protein (101 aa).

Residues Glu-30–Leu-50 traverse the membrane as a helical segment. Residues Val-75–Gly-101 are disordered.

It belongs to the mastrevirus movement protein family. In terms of assembly, interacts with the capsid protein (CP). Part of a MP-CP-viral DNA complex.

It is found in the host membrane. In terms of biological role, involved in the viral transport within, and between cells. The polypeptide is Movement protein (Maize streak virus genotype A (isolate Kenya) (MSV)).